Here is a 209-residue protein sequence, read N- to C-terminus: Large ribosomal subunit protein uL3 (209 aa).

Gln150 is subject to N5-methylglutamine.

This sequence belongs to the universal ribosomal protein uL3 family. Part of the 50S ribosomal subunit. Forms a cluster with proteins L14 and L19. In terms of processing, methylated by PrmB.

In terms of biological role, one of the primary rRNA binding proteins, it binds directly near the 3'-end of the 23S rRNA, where it nucleates assembly of the 50S subunit. This chain is Large ribosomal subunit protein uL3, found in Pasteurella multocida (strain Pm70).